The following is an 875-amino-acid chain: Lysine-specific demethylase JMJ26 (875 aa).

The interval 31–103 (KPVEATSLSS…RSSVKKRATT (73 aa)) is disordered. The short motif at 62–69 (RKRSKADE) is the Nuclear localization signal element. Positions 79-93 (KCDDENKCEENEKKQ) are enriched in basic and acidic residues. Zn(2+) is bound by residues C193, C196, C207, C210, C216, C219, C236, C239, C322, C325, C339, and C347. The RING-type; degenerate zinc-finger motif lies at 193 to 240 (CHQCSKGERRYLFICTFCEVRLYCFPCIKKWYPHLSTDDILEKCPFCR). The B box-type; degenerate zinc finger occupies 317–347 (EERVFCNHCATSIVDLHRSCPKCSYELCLNC). A JmjC domain is found at 614 to 837 (PRSGILNIAT…ECLRLTDEFR (224 aa)). H658, D660, and H805 together coordinate Fe cation.

This sequence belongs to the JARID1 histone demethylase family. Fe(2+) is required as a cofactor. In terms of tissue distribution, expressed in inflorescences, roots, siliques, leaves and stems.

The protein localises to the nucleus. In terms of biological role, may function as histone H3 lysine demethylase and be involved in regulation of gene expression. The protein is Lysine-specific demethylase JMJ26 of Arabidopsis thaliana (Mouse-ear cress).